Reading from the N-terminus, the 984-residue chain is Putative formate dehydrogenase SAV2309 (984 aa).

The 77-residue stretch at 3–79 (EHLVVTLDGK…PMTVNTVNND (77 aa)) folds into the 2Fe-2S ferredoxin-type domain. Positions 37, 48, 51, and 63 each coordinate [2Fe-2S] cluster. One can recognise a 4Fe-4S His(Cys)3-ligated-type domain in the interval 79–119 (DVKDAQKEALDRILEKHMLYCTVCDYNNGDCEIHNTMDAWG). 16 residues coordinate [4Fe-4S] cluster: histidine 95, cysteine 99, cysteine 102, cysteine 109, cysteine 147, cysteine 150, cysteine 153, cysteine 157, cysteine 190, cysteine 193, cysteine 196, cysteine 200, cysteine 264, cysteine 267, cysteine 271, and cysteine 299. 2 4Fe-4S ferredoxin-type domains span residues 138–165 (PFYR…VNET) and 181–211 (NDVP…VNME). The segment at 252–984 (MRKERIKKTK…YVFPGNQVDK (733 aa)) is formate dehydrogenase. The 4Fe-4S Mo/W bis-MGD-type domain maps to 257-313 (IKKTKTVCTYCGVGCSFEVWTKDREILKVQPSHDSPANKIVTCVKGKFSWGHINSDQ).

The protein in the C-terminal section; belongs to the prokaryotic molybdopterin-containing oxidoreductase family. The cofactor is [2Fe-2S] cluster. [4Fe-4S] cluster serves as cofactor. Mo-bis(molybdopterin guanine dinucleotide) is required as a cofactor.

It carries out the reaction formate + NAD(+) = CO2 + NADH. The chain is Putative formate dehydrogenase SAV2309 from Staphylococcus aureus (strain Mu50 / ATCC 700699).